The sequence spans 204 residues: ATP-dependent Clp protease proteolytic subunit (204 aa).

Ser102 functions as the Nucleophile in the catalytic mechanism. His127 is a catalytic residue.

The protein belongs to the peptidase S14 family. Fourteen ClpP subunits assemble into 2 heptameric rings which stack back to back to give a disk-like structure with a central cavity, resembling the structure of eukaryotic proteasomes.

Its subcellular location is the cytoplasm. It catalyses the reaction Hydrolysis of proteins to small peptides in the presence of ATP and magnesium. alpha-casein is the usual test substrate. In the absence of ATP, only oligopeptides shorter than five residues are hydrolyzed (such as succinyl-Leu-Tyr-|-NHMec, and Leu-Tyr-Leu-|-Tyr-Trp, in which cleavage of the -Tyr-|-Leu- and -Tyr-|-Trp bonds also occurs).. Functionally, cleaves peptides in various proteins in a process that requires ATP hydrolysis. Has a chymotrypsin-like activity. Plays a major role in the degradation of misfolded proteins. The sequence is that of ATP-dependent Clp protease proteolytic subunit from Neisseria meningitidis serogroup C (strain 053442).